The sequence spans 542 residues: CTP synthase (542 aa).

The tract at residues 1–265 (MTRFIFITGG…DVQVCRHFHL (265 aa)) is amidoligase domain. S13 lines the CTP pocket. Position 13 (S13) interacts with UTP. ATP-binding positions include 14 to 19 (SLGKGL) and D71. Mg(2+)-binding residues include D71 and E139. CTP is bound by residues 146 to 148 (DIE), 186 to 191 (KTKPTQ), and K222. UTP is bound by residues 186 to 191 (KTKPTQ) and K222. The region spanning 291–541 (TIAVVGKYTS…VQAAITQSRL (251 aa)) is the Glutamine amidotransferase type-1 domain. G353 serves as a coordination point for L-glutamine. The Nucleophile; for glutamine hydrolysis role is filled by C380. Residues 381-384 (FGMQ), E404, and R469 contribute to the L-glutamine site. Active-site residues include H514 and E516.

The protein belongs to the CTP synthase family. In terms of assembly, homotetramer.

The enzyme catalyses UTP + L-glutamine + ATP + H2O = CTP + L-glutamate + ADP + phosphate + 2 H(+). The catalysed reaction is L-glutamine + H2O = L-glutamate + NH4(+). It catalyses the reaction UTP + NH4(+) + ATP = CTP + ADP + phosphate + 2 H(+). Its pathway is pyrimidine metabolism; CTP biosynthesis via de novo pathway; CTP from UDP: step 2/2. Allosterically activated by GTP, when glutamine is the substrate; GTP has no effect on the reaction when ammonia is the substrate. The allosteric effector GTP functions by stabilizing the protein conformation that binds the tetrahedral intermediate(s) formed during glutamine hydrolysis. Inhibited by the product CTP, via allosteric rather than competitive inhibition. In terms of biological role, catalyzes the ATP-dependent amination of UTP to CTP with either L-glutamine or ammonia as the source of nitrogen. Regulates intracellular CTP levels through interactions with the four ribonucleotide triphosphates. The polypeptide is CTP synthase (Rhodospirillum rubrum (strain ATCC 11170 / ATH 1.1.1 / DSM 467 / LMG 4362 / NCIMB 8255 / S1)).